Here is a 320-residue protein sequence, read N- to C-terminus: Protein TsetseEP (320 aa).

A signal peptide spans methionine 1–alanine 19. Residues glycine 192 to phenylalanine 320 are disordered. Residues proline 194 to proline 308 are compositionally biased toward acidic residues. The tract at residues proline 194–glutamate 311 is 59 X 2 AA tandem repeats of P-E.

As to expression, expressed in the gut, but not salivary glands, of female and male flies (at protein level). Present in vesicles in midgut cells and in the lumen of the gut.

It is found in the secreted. The sequence is that of Protein TsetseEP from Glossina morsitans morsitans (Savannah tsetse fly).